The sequence spans 807 residues: DNA gyrase subunit B (807 aa).

The Toprim domain maps to 429-543; it reads SELFIVEGDS…KGYLYIAQPP (115 aa). Positions 435, 508, and 510 each coordinate Mg(2+).

This sequence belongs to the type II topoisomerase GyrB family. As to quaternary structure, heterotetramer, composed of two GyrA and two GyrB chains. In the heterotetramer, GyrA contains the active site tyrosine that forms a transient covalent intermediate with DNA, while GyrB binds cofactors and catalyzes ATP hydrolysis. Requires Mg(2+) as cofactor. It depends on Mn(2+) as a cofactor. The cofactor is Ca(2+).

It localises to the cytoplasm. It catalyses the reaction ATP-dependent breakage, passage and rejoining of double-stranded DNA.. In terms of biological role, a type II topoisomerase that negatively supercoils closed circular double-stranded (ds) DNA in an ATP-dependent manner to modulate DNA topology and maintain chromosomes in an underwound state. Negative supercoiling favors strand separation, and DNA replication, transcription, recombination and repair, all of which involve strand separation. Also able to catalyze the interconversion of other topological isomers of dsDNA rings, including catenanes and knotted rings. Type II topoisomerases break and join 2 DNA strands simultaneously in an ATP-dependent manner. In Rickettsia conorii (strain ATCC VR-613 / Malish 7), this protein is DNA gyrase subunit B.